A 691-amino-acid polypeptide reads, in one-letter code: Guanylate cyclase soluble subunit alpha-1 (691 aa).

Ser-267 is modified (phosphoserine). Residues 480 to 607 (VTMLFSDIVG…GNNVTLANKF (128 aa)) enclose the Guanylate cyclase domain.

Belongs to the adenylyl cyclase class-4/guanylyl cyclase family. In terms of assembly, the active enzyme is formed by a heterodimer of an alpha and a beta subunit. Heterodimer with GUCY1B1. Mg(2+) serves as cofactor. The cofactor is Mn(2+).

It localises to the cytoplasm. The enzyme catalyses GTP = 3',5'-cyclic GMP + diphosphate. Activated by nitric oxide in the presence of magnesium or manganese ions. The protein is Guanylate cyclase soluble subunit alpha-1 (Gucy1a1) of Mus musculus (Mouse).